Here is a 953-residue protein sequence, read N- to C-terminus: Isoleucine--tRNA ligase (953 aa).

Positions 58–68 (PYANGNIHLGH) match the 'HIGH' region motif. Glu565 serves as a coordination point for L-isoleucyl-5'-AMP. Residues 606-610 (KMSKS) carry the 'KMSKS' region motif. Lys609 is an ATP binding site. Zn(2+) is bound by residues Cys916, Cys919, Cys936, and Cys939.

Belongs to the class-I aminoacyl-tRNA synthetase family. IleS type 1 subfamily. Monomer. Zn(2+) serves as cofactor.

The protein resides in the cytoplasm. The catalysed reaction is tRNA(Ile) + L-isoleucine + ATP = L-isoleucyl-tRNA(Ile) + AMP + diphosphate. Catalyzes the attachment of isoleucine to tRNA(Ile). As IleRS can inadvertently accommodate and process structurally similar amino acids such as valine, to avoid such errors it has two additional distinct tRNA(Ile)-dependent editing activities. One activity is designated as 'pretransfer' editing and involves the hydrolysis of activated Val-AMP. The other activity is designated 'posttransfer' editing and involves deacylation of mischarged Val-tRNA(Ile). The polypeptide is Isoleucine--tRNA ligase (Colwellia psychrerythraea (strain 34H / ATCC BAA-681) (Vibrio psychroerythus)).